The sequence spans 218 residues: Adenylate kinase (218 aa).

ATP is bound at residue 10 to 15; that stretch reads GAGKGT. The NMP stretch occupies residues 30-59; sequence STGDIFREAIAKGTELGRKVQDIVNSGNLV. AMP-binding positions include Thr-31, Arg-36, 57–59, 85–88, and Gln-92; these read NLV and GYPR. The LID stretch occupies residues 126–163; the sequence is TRRVCSKCGKVYNVITLPSKVEGICDDCGGTLIQRDDD. Arg-127 lines the ATP pocket. Zn(2+)-binding residues include Cys-130 and Cys-133. Residue 136–137 coordinates ATP; it reads VY. Cys-150 and Cys-153 together coordinate Zn(2+). The AMP site is built by Arg-160 and Arg-171. Lys-199 provides a ligand contact to ATP.

It belongs to the adenylate kinase family. As to quaternary structure, monomer.

The protein localises to the cytoplasm. The catalysed reaction is AMP + ATP = 2 ADP. The protein operates within purine metabolism; AMP biosynthesis via salvage pathway; AMP from ADP: step 1/1. Functionally, catalyzes the reversible transfer of the terminal phosphate group between ATP and AMP. Plays an important role in cellular energy homeostasis and in adenine nucleotide metabolism. This chain is Adenylate kinase, found in Fervidobacterium nodosum (strain ATCC 35602 / DSM 5306 / Rt17-B1).